A 309-amino-acid polypeptide reads, in one-letter code: NAD kinase (309 aa).

The active-site Proton acceptor is Asp89. NAD(+) is bound by residues 89-90, 163-164, His174, Arg191, Asp193, and 204-209; these read DG, NE, and TAYSLS.

This sequence belongs to the NAD kinase family. A divalent metal cation is required as a cofactor.

Its subcellular location is the cytoplasm. It catalyses the reaction NAD(+) + ATP = ADP + NADP(+) + H(+). Its function is as follows. Involved in the regulation of the intracellular balance of NAD and NADP, and is a key enzyme in the biosynthesis of NADP. Catalyzes specifically the phosphorylation on 2'-hydroxyl of the adenosine moiety of NAD to yield NADP. The chain is NAD kinase from Shewanella piezotolerans (strain WP3 / JCM 13877).